The following is a 189-amino-acid chain: uncharacterized protein (189 aa).

Helical transmembrane passes span 35-55, 97-117, 123-143, and 144-164; these read IIWY…AVMK, GVLQ…ALHF, WLLF…YEWT, and GNLF…ACQI.

The protein localises to the cell membrane. This is an uncharacterized protein from Bacillus subtilis (strain 168).